The following is a 51-amino-acid chain: Large ribosomal subunit protein eL39 (51 aa).

It belongs to the eukaryotic ribosomal protein eL39 family.

This is Large ribosomal subunit protein eL39 (RpL39) from Drosophila melanogaster (Fruit fly).